The following is a 79-amino-acid chain: MKLTCVLIITVLFLTASQLITADYSRDQRQYRAVRLGDEMRNFKGARDCGGQGEGCYTQPCCPGLRCRGGGTGGGVCQL.

Residues 1-22 (MKLTCVLIITVLFLTASQLITA) form the signal peptide. Positions 23–47 (DYSRDQRQYRAVRLGDEMRNFKGAR) are excised as a propeptide. 3 disulfide bridges follow: cysteine 49/cysteine 62, cysteine 56/cysteine 67, and cysteine 61/cysteine 77. 2 positions are modified to 4-hydroxyproline: proline 60 and proline 63.

Expressed by the venom duct.

The protein resides in the secreted. Ion channel inhibitor that inhibits the increase in intracellular calcium upon depolarization in DRG neurons. In vivo, both intraperitoneal and intracranial injections into mice induce hyperactivity. This Conus virgo (Virgin cone) protein is Conotoxin Vi6.1.